A 151-amino-acid polypeptide reads, in one-letter code: UPF0179 protein MJ1627 (151 aa).

The protein belongs to the UPF0179 family.

The sequence is that of UPF0179 protein MJ1627 from Methanocaldococcus jannaschii (strain ATCC 43067 / DSM 2661 / JAL-1 / JCM 10045 / NBRC 100440) (Methanococcus jannaschii).